The chain runs to 234 residues: MPIHDWPEQERPREKLIARGPTALSDAELLALFLGSGFGGRDAVQTARDLLQAHGPLRVLLDRPAAELARLPGLGPARSCTLAAGLELAHRYLAAELEHGEAVGNNPAAVGRYLQHRLRGQAREVFMALFLDNRHRLIACEELFHGTINAAPVYPREVVRRALLHNAAAVILSHNHPSGDPEPSSADTRITDELQQALAMVDVRLLDHFVVGEGRPVSFAERGLLSPPQPRLFG.

In terms of domain architecture, MPN spans 103-225; it reads VGNNPAAVGR…PVSFAERGLL (123 aa). Zn(2+) is bound by residues H174, H176, and D187. The JAMM motif signature appears at 174–187; it reads HNHPSGDPEPSSAD.

The protein belongs to the UPF0758 family.

This chain is UPF0758 protein Smlt0399, found in Stenotrophomonas maltophilia (strain K279a).